Here is a 215-residue protein sequence, read N- to C-terminus: Pyrophosphatase PpaX (215 aa).

The Nucleophile role is filled by Asp-9.

The protein belongs to the HAD-like hydrolase superfamily. PpaX family. Requires Mg(2+) as cofactor.

The catalysed reaction is diphosphate + H2O = 2 phosphate + H(+). Its function is as follows. Hydrolyzes pyrophosphate formed during P-Ser-HPr dephosphorylation by HPrK/P. Might play a role in controlling the intracellular pyrophosphate pool. This Anoxybacillus flavithermus (strain DSM 21510 / WK1) protein is Pyrophosphatase PpaX.